The chain runs to 282 residues: tRNA (guanine-N(1)-)-methyltransferase (282 aa).

A disordered region spans residues 77–114 (TGPAATVSDLESSAEHKRNLRPATTNGDAEPLGEKAGG). S-adenosyl-L-methionine contacts are provided by residues Gly-149 and 173 to 178 (IGDYVL).

The protein belongs to the RNA methyltransferase TrmD family. Homodimer.

The protein localises to the cytoplasm. It carries out the reaction guanosine(37) in tRNA + S-adenosyl-L-methionine = N(1)-methylguanosine(37) in tRNA + S-adenosyl-L-homocysteine + H(+). Its function is as follows. Specifically methylates guanosine-37 in various tRNAs. The sequence is that of tRNA (guanine-N(1)-)-methyltransferase from Corynebacterium jeikeium (strain K411).